Reading from the N-terminus, the 419-residue chain is Tol-Pal system protein TolB (419 aa).

The first 19 residues, 1 to 19 (MCNRIISLFLLLFTGQVIA), serve as a signal peptide directing secretion.

Belongs to the TolB family. As to quaternary structure, the Tol-Pal system is composed of five core proteins: the inner membrane proteins TolA, TolQ and TolR, the periplasmic protein TolB and the outer membrane protein Pal. They form a network linking the inner and outer membranes and the peptidoglycan layer.

Its subcellular location is the periplasm. In terms of biological role, part of the Tol-Pal system, which plays a role in outer membrane invagination during cell division and is important for maintaining outer membrane integrity. The protein is Tol-Pal system protein TolB of Legionella pneumophila (strain Paris).